Consider the following 347-residue polypeptide: Phenylalanine--tRNA ligase alpha subunit (347 aa).

Mg(2+) is bound at residue Glu-261.

This sequence belongs to the class-II aminoacyl-tRNA synthetase family. Phe-tRNA synthetase alpha subunit type 1 subfamily. Tetramer of two alpha and two beta subunits. Mg(2+) is required as a cofactor.

It is found in the cytoplasm. The enzyme catalyses tRNA(Phe) + L-phenylalanine + ATP = L-phenylalanyl-tRNA(Phe) + AMP + diphosphate + H(+). This is Phenylalanine--tRNA ligase alpha subunit from Streptococcus uberis (strain ATCC BAA-854 / 0140J).